The chain runs to 393 residues: tRNA(Met) cytidine acetate ligase (393 aa).

Positions 81, 142, and 167 each coordinate ATP.

Belongs to the TmcAL family.

Its subcellular location is the cytoplasm. It carries out the reaction cytidine(34) in elongator tRNA(Met) + acetate + ATP = N(4)-acetylcytidine(34) in elongator tRNA(Met) + AMP + diphosphate. In terms of biological role, catalyzes the formation of N(4)-acetylcytidine (ac(4)C) at the wobble position of elongator tRNA(Met), using acetate and ATP as substrates. First activates an acetate ion to form acetyladenylate (Ac-AMP) and then transfers the acetyl group to tRNA to form ac(4)C34. The chain is tRNA(Met) cytidine acetate ligase from Bacillus cereus (strain AH187).